We begin with the raw amino-acid sequence, 148 residues long: Deoxyuridine 5'-triphosphate nucleotidohydrolase (148 aa).

Substrate contacts are provided by residues 67 to 69 (RSG), Asn-80, 84 to 86 (LID), and Met-94.

It belongs to the dUTPase family. Mg(2+) is required as a cofactor.

It carries out the reaction dUTP + H2O = dUMP + diphosphate + H(+). The protein operates within pyrimidine metabolism; dUMP biosynthesis; dUMP from dCTP (dUTP route): step 2/2. Its function is as follows. This enzyme is involved in nucleotide metabolism: it produces dUMP, the immediate precursor of thymidine nucleotides and it decreases the intracellular concentration of dUTP so that uracil cannot be incorporated into DNA. The protein is Deoxyuridine 5'-triphosphate nucleotidohydrolase of Francisella philomiragia subsp. philomiragia (strain ATCC 25017 / CCUG 19701 / FSC 153 / O#319-036).